The sequence spans 84 residues: Small ribosomal subunit protein uS17 (84 aa).

Belongs to the universal ribosomal protein uS17 family. Part of the 30S ribosomal subunit.

One of the primary rRNA binding proteins, it binds specifically to the 5'-end of 16S ribosomal RNA. In Buchnera aphidicola subsp. Cinara cedri (strain Cc), this protein is Small ribosomal subunit protein uS17.